Reading from the N-terminus, the 141-residue chain is Large ribosomal subunit protein uL11 (141 aa).

It belongs to the universal ribosomal protein uL11 family. In terms of assembly, part of the ribosomal stalk of the 50S ribosomal subunit. Interacts with L10 and the large rRNA to form the base of the stalk. L10 forms an elongated spine to which L12 dimers bind in a sequential fashion forming a multimeric L10(L12)X complex. One or more lysine residues are methylated.

Functionally, forms part of the ribosomal stalk which helps the ribosome interact with GTP-bound translation factors. In Opitutus terrae (strain DSM 11246 / JCM 15787 / PB90-1), this protein is Large ribosomal subunit protein uL11.